A 468-amino-acid chain; its full sequence is Plant UBX domain-containing protein 7 (468 aa).

Met-1 is subject to N-acetylmethionine. The UBA-like domain occupies 7–48 (SGDQQRLVSSFLEIAVGQTAETARQFLQATSWKLEEAIQLFY). Disordered stretches follow at residues 138-168 (KSPG…SAPR) and 299-329 (HFAS…KDEE). A compositionally biased stretch (low complexity) spans 150–166 (SSASASASASASESASA). The UIM domain occupies 328-347 (EEEEELQRALAASLEDNNMK). The 82-residue stretch at 385 to 466 (DRSLQCRVGI…GVANSMISAT (82 aa)) folds into the UBX domain.

As to quaternary structure, interacts with CDC48A via its UBX domain and with ubiquitin via its N-terminal UBA-like domain. Expressed broadly in sporophyte and gametophyte cells.

Its subcellular location is the nucleus. Acts as a bridge between CDC48A and ubiquitin, suggesting a role in targeted protein degradation. In Arabidopsis thaliana (Mouse-ear cress), this protein is Plant UBX domain-containing protein 7.